The sequence spans 248 residues: Ubiquinone/menaquinone biosynthesis C-methyltransferase UbiE (248 aa).

Positions 68 and 92 each coordinate S-adenosyl-L-methionine.

The protein belongs to the class I-like SAM-binding methyltransferase superfamily. MenG/UbiE family.

It carries out the reaction a 2-demethylmenaquinol + S-adenosyl-L-methionine = a menaquinol + S-adenosyl-L-homocysteine + H(+). The enzyme catalyses a 2-methoxy-6-(all-trans-polyprenyl)benzene-1,4-diol + S-adenosyl-L-methionine = a 5-methoxy-2-methyl-3-(all-trans-polyprenyl)benzene-1,4-diol + S-adenosyl-L-homocysteine + H(+). The protein operates within quinol/quinone metabolism; menaquinone biosynthesis; menaquinol from 1,4-dihydroxy-2-naphthoate: step 2/2. Its pathway is cofactor biosynthesis; ubiquinone biosynthesis. Its function is as follows. Methyltransferase required for the conversion of demethylmenaquinol (DMKH2) to menaquinol (MKH2) and the conversion of 2-polyprenyl-6-methoxy-1,4-benzoquinol (DDMQH2) to 2-polyprenyl-3-methyl-6-methoxy-1,4-benzoquinol (DMQH2). The protein is Ubiquinone/menaquinone biosynthesis C-methyltransferase UbiE of Rickettsia massiliae (strain Mtu5).